A 104-amino-acid polypeptide reads, in one-letter code: Protamine-3 (104 aa).

Residues 1 to 104 form a disordered region; it reads MGSRCAKLST…PSPEPKQKHS (104 aa). The segment covering 45–70 has biased composition (acidic residues); sequence EGEEEEEDEEDEEEEDDDEEDEEEEQ. Phosphoserine is present on Ser96.

Belongs to the protamine P3 family. As to expression, testis.

The protein localises to the nucleus. Its subcellular location is the chromosome. Its function is as follows. Protamines substitute for histones in the chromatin of sperm during the haploid phase of spermatogenesis. They compact sperm DNA into a highly condensed, stable and inactive complex. In Rattus norvegicus (Rat), this protein is Protamine-3 (Prm3).